Consider the following 862-residue polypeptide: FAS1 domain-containing protein YLR001C (862 aa).

The first 23 residues, 1-23 (MNMAIQTIKYIFWLLPILGLTQA), serve as a signal peptide directing secretion. At 24–762 (LLQNPGDDFP…KYHLRLPGIA (739 aa)) the chain is on the vacuolar side. Positions 34-162 (FSTVIDILSE…ASLQGINNLL (129 aa)) constitute an FAS1 1 domain. N68, N112, N152, N200, N291, N333, N450, N521, N542, N569, N663, N679, and N688 each carry an N-linked (GlcNAc...) asparagine glycan. FAS1 domains follow at residues 463–604 (PGDL…DQLD) and 606–744 (PVDL…DKPI). A helical transmembrane segment spans residues 763 to 783 (VGFGVIIGVTIAISLLFCIII). The Cytoplasmic segment spans residues 784-862 (TRGGKVKDKN…QKGGRSVSTS (79 aa)).

It is found in the vacuole membrane. The sequence is that of FAS1 domain-containing protein YLR001C from Saccharomyces cerevisiae (strain ATCC 204508 / S288c) (Baker's yeast).